Reading from the N-terminus, the 561-residue chain is Arginine--tRNA ligase (561 aa).

The short motif at 128-138 (ANPTGPLHVGH) is the 'HIGH' region element.

It belongs to the class-I aminoacyl-tRNA synthetase family. In terms of assembly, monomer.

The protein localises to the cytoplasm. It carries out the reaction tRNA(Arg) + L-arginine + ATP = L-arginyl-tRNA(Arg) + AMP + diphosphate. In Marinobacter nauticus (strain ATCC 700491 / DSM 11845 / VT8) (Marinobacter aquaeolei), this protein is Arginine--tRNA ligase.